We begin with the raw amino-acid sequence, 193 residues long: Crossover junction endodeoxyribonuclease RuvC (193 aa).

Residues aspartate 7, glutamate 68, and aspartate 141 contribute to the active site. Residues aspartate 7, glutamate 68, and aspartate 141 each coordinate Mg(2+). Residues arginine 174–methionine 193 form a disordered region. Residues alanine 183–methionine 193 show a composition bias toward basic residues.

Belongs to the RuvC family. Homodimer which binds Holliday junction (HJ) DNA. The HJ becomes 2-fold symmetrical on binding to RuvC with unstacked arms; it has a different conformation from HJ DNA in complex with RuvA. In the full resolvosome a probable DNA-RuvA(4)-RuvB(12)-RuvC(2) complex forms which resolves the HJ. Mg(2+) serves as cofactor.

Its subcellular location is the cytoplasm. The catalysed reaction is Endonucleolytic cleavage at a junction such as a reciprocal single-stranded crossover between two homologous DNA duplexes (Holliday junction).. The RuvA-RuvB-RuvC complex processes Holliday junction (HJ) DNA during genetic recombination and DNA repair. Endonuclease that resolves HJ intermediates. Cleaves cruciform DNA by making single-stranded nicks across the HJ at symmetrical positions within the homologous arms, yielding a 5'-phosphate and a 3'-hydroxyl group; requires a central core of homology in the junction. The consensus cleavage sequence is 5'-(A/T)TT(C/G)-3'. Cleavage occurs on the 3'-side of the TT dinucleotide at the point of strand exchange. HJ branch migration catalyzed by RuvA-RuvB allows RuvC to scan DNA until it finds its consensus sequence, where it cleaves and resolves the cruciform DNA. In Bifidobacterium animalis subsp. lactis (strain AD011), this protein is Crossover junction endodeoxyribonuclease RuvC.